A 186-amino-acid polypeptide reads, in one-letter code: Ribosome-recycling factor (186 aa).

The protein belongs to the RRF family.

The protein localises to the cytoplasm. Functionally, responsible for the release of ribosomes from messenger RNA at the termination of protein biosynthesis. May increase the efficiency of translation by recycling ribosomes from one round of translation to another. This is Ribosome-recycling factor from Bordetella avium (strain 197N).